The sequence spans 5641 residues: Cyclochlorotine synthetase (5641 aa).

Residues 95 to 124 (PENLNGHLIGSTNGHKKQWENDSADDKRGQ) form a disordered region. Basic and acidic residues predominate over residues 111-124 (KQWENDSADDKRGQ). The segment at 217-622 (FTENVQRYPT…GRRDTQVKIR (406 aa)) is adenylation (A) domain 1. The Carrier 1 domain occupies 816–892 (TEEEYKIQTL…DLVSNCKMSA (77 aa)). Residues 821-889 (KIQTLKEIWS…QLSDLVSNCK (69 aa)) are thiolation (T) domain 1. S853 carries the O-(pantetheine 4'-phosphoryl)serine modification. The tract at residues 926-1333 (EDVYPCTPLQ…AHVAEQIGQP (408 aa)) is condensation (C) domain 1. The tract at residues 1390 to 1768 (DGNLTFEELN…ISRATTQIKI (379 aa)) is adenylation (A) domain 2. The region spanning 1902–1978 (IELSEKQENM…QLVMIATELT (77 aa)) is the Carrier 2 domain. Positions 1907–1975 (KQENMARLWA…RFDQLVMIAT (69 aa)) are thiolation (T) domain 2. Residue S1939 is modified to O-(pantetheine 4'-phosphoryl)serine. The segment at 2022–2438 (DIYACTPFQE…DLASEQDLAK (417 aa)) is condensation (C) domain 2. The adenylation (A) domain 3 stretch occupies residues 2459 to 2859 (AEKARQHPNK…GRADTQVKLR (401 aa)). Positions 2976-3052 (GPLTEMETTL…GMAIKIQPIH (77 aa)) constitute a Carrier 3 domain. The segment at 2977–3049 (PLTEMETTLA…NLAGMAIKIQ (73 aa)) is thiolation (T) domain 3. S3013 carries the O-(pantetheine 4'-phosphoryl)serine modification. Residues 3089-3482 (DIYPCTPLQV…LETVLSAFST (394 aa)) are condensation (C) domain 3. Positions 3523-3873 (VQRAPDKVAI…IARKDLQVKL (351 aa)) are adenylation (A) domain 4. Residues 4005 to 4081 (IPSTPTEMKM…ELATKIAPRI (77 aa)) form the Carrier 4 domain. Residues 4010 to 4078 (TEMKMQQLWA…RLSELATKIA (69 aa)) form a thiolation (T) domain 4 region. S4042 carries the O-(pantetheine 4'-phosphoryl)serine modification. The condensation (C) domain 4 stretch occupies residues 4123–4549 (KDVYPCTPLQ…QSLDSLSQQD (427 aa)). Residues 4574–4982 (QEIAGRHPDA…GRIGTDIKLR (409 aa)) form an adenylation (A) domain 5 region. The Carrier 5 domain maps to 5118-5194 (PPSTQEEKVI…SLAEKISWES (77 aa)). Residues 5123–5191 (EEKVIAALWA…KLASLAEKIS (69 aa)) are thiolation (T) domain 5. S5155 bears the O-(pantetheine 4'-phosphoryl)serine mark. Residues 5260-5556 (AYLDIGPDVQ…DKCTTCVSGS (297 aa)) form a condensation (C) domain 5 region.

It belongs to the NRP synthetase family.

It functions in the pathway mycotoxin biosynthesis. Functionally, nonribosomal peptide synthetase; part of the gene cluster that mediates the biosynthesis of the mycotoxin cyclochlorotine, a hepatotoxic and carcinogenic cyclic chlorinated pentapeptide. Within the pathway, The NRPS cctN initially catalyzes the condensation of L-serine (Ser), Pro, L-2-aminobutyrate (2Abu), Ser, and beta-Phe in this order. During the chain elongation, side-chain hydroxy group of Ser4 would be used as a nucleophile, giving isocyclotine as a product of terminal condensation-like (CT) domain-catalyzed cyclization. After the dichlorination of Pro2 catalyzed by cctP2 to produce isocyclochlorotine, the cctO-mediated transacylation of isocyclochlorotine can furnish cyclochlorotine. The subsequent hydroxylation of cyclochlorotine by cctR yields hydroxycyclochlorotine as the final product. CctP1 probably acts as a phenylalanine aminomutase and provides the uncommon building block beta-Phe. Furthermore, 2Abu can be synthesized from threonine by one of the threonine dehydratases and transaminases localized outside of the cluster. The functions of the remaining proteins encoded by the cluster, cctM and cctT, have not been identified yet. In Talaromyces islandicus (Penicillium islandicum), this protein is Cyclochlorotine synthetase.